Reading from the N-terminus, the 139-residue chain is Putative pre-16S rRNA nuclease (139 aa).

This sequence belongs to the YqgF nuclease family.

The protein resides in the cytoplasm. Functionally, could be a nuclease involved in processing of the 5'-end of pre-16S rRNA. The protein is Putative pre-16S rRNA nuclease of Phocaeicola vulgatus (strain ATCC 8482 / DSM 1447 / JCM 5826 / CCUG 4940 / NBRC 14291 / NCTC 11154) (Bacteroides vulgatus).